A 338-amino-acid chain; its full sequence is RNA 3'-terminal phosphate cyclase (338 aa).

Residues Q103 and 283–287 each bind ATP; that span reads YLADQ. The active-site Tele-AMP-histidine intermediate is H308.

The protein belongs to the RNA 3'-terminal cyclase family. Type 1 subfamily.

Its subcellular location is the cytoplasm. The enzyme catalyses a 3'-end 3'-phospho-ribonucleotide-RNA + ATP = a 3'-end 2',3'-cyclophospho-ribonucleotide-RNA + AMP + diphosphate. In terms of biological role, catalyzes the conversion of 3'-phosphate to a 2',3'-cyclic phosphodiester at the end of RNA. The mechanism of action of the enzyme occurs in 3 steps: (A) adenylation of the enzyme by ATP; (B) transfer of adenylate to an RNA-N3'P to produce RNA-N3'PP5'A; (C) and attack of the adjacent 2'-hydroxyl on the 3'-phosphorus in the diester linkage to produce the cyclic end product. The biological role of this enzyme is unknown but it is likely to function in some aspects of cellular RNA processing. The protein is RNA 3'-terminal phosphate cyclase of Escherichia coli O6:H1 (strain CFT073 / ATCC 700928 / UPEC).